A 319-amino-acid polypeptide reads, in one-letter code: Methionyl-tRNA formyltransferase (319 aa).

A (6S)-5,6,7,8-tetrahydrofolate-binding site is contributed by 112–115 (SILP).

Belongs to the Fmt family.

It carries out the reaction L-methionyl-tRNA(fMet) + (6R)-10-formyltetrahydrofolate = N-formyl-L-methionyl-tRNA(fMet) + (6S)-5,6,7,8-tetrahydrofolate + H(+). Functionally, attaches a formyl group to the free amino group of methionyl-tRNA(fMet). The formyl group appears to play a dual role in the initiator identity of N-formylmethionyl-tRNA by promoting its recognition by IF2 and preventing the misappropriation of this tRNA by the elongation apparatus. This chain is Methionyl-tRNA formyltransferase, found in Shewanella denitrificans (strain OS217 / ATCC BAA-1090 / DSM 15013).